Consider the following 224-residue polypeptide: Cytidylate kinase (224 aa).

9–17 (GPSGSGKGT) serves as a coordination point for ATP.

The protein belongs to the cytidylate kinase family. Type 1 subfamily.

It is found in the cytoplasm. It carries out the reaction CMP + ATP = CDP + ADP. The catalysed reaction is dCMP + ATP = dCDP + ADP. The polypeptide is Cytidylate kinase (Saccharophagus degradans (strain 2-40 / ATCC 43961 / DSM 17024)).